Here is a 244-residue protein sequence, read N- to C-terminus: uncharacterized protein (244 aa).

Residues 1–18 form the signal peptide; that stretch reads MQFSVLCKFLLLVTAVMA. Topologically, residues 19-223 are lumenal; sequence QTEYTPGFTT…TTIPSSAVHY (205 aa). Composition is skewed to low complexity over residues 55-65 and 75-128; these read ETSTHSVTSTN and TSHN…TTHV. The interval 55–128 is disordered; that stretch reads ETSTHSVTST…TTVVPPTTHV (74 aa). Residues 224–244 form a helical membrane-spanning segment; it reads ASPSGLLALVVMLISAFAFLA.

It is found in the endoplasmic reticulum membrane. This is an uncharacterized protein from Schizosaccharomyces pombe (strain 972 / ATCC 24843) (Fission yeast).